The following is a 204-amino-acid chain: Urease accessory protein UreG (204 aa).

12 to 19 is a GTP binding site; the sequence is GPVGSGKT.

Belongs to the SIMIBI class G3E GTPase family. UreG subfamily. As to quaternary structure, homodimer. UreD, UreF and UreG form a complex that acts as a GTP-hydrolysis-dependent molecular chaperone, activating the urease apoprotein by helping to assemble the nickel containing metallocenter of UreC. The UreE protein probably delivers the nickel.

Its subcellular location is the cytoplasm. Its function is as follows. Facilitates the functional incorporation of the urease nickel metallocenter. This process requires GTP hydrolysis, probably effectuated by UreG. The polypeptide is Urease accessory protein UreG (Pseudomonas fluorescens (strain Pf0-1)).